A 249-amino-acid chain; its full sequence is Segregation and condensation protein A (249 aa).

This sequence belongs to the ScpA family. Component of a cohesin-like complex composed of ScpA, ScpB and the Smc homodimer, in which ScpA and ScpB bind to the head domain of Smc. The presence of the three proteins is required for the association of the complex with DNA.

The protein localises to the cytoplasm. Its function is as follows. Participates in chromosomal partition during cell division. May act via the formation of a condensin-like complex containing Smc and ScpB that pull DNA away from mid-cell into both cell halves. This Listeria welshimeri serovar 6b (strain ATCC 35897 / DSM 20650 / CCUG 15529 / CIP 8149 / NCTC 11857 / SLCC 5334 / V8) protein is Segregation and condensation protein A.